The chain runs to 371 residues: Peptide chain release factor 2 (371 aa).

Gln253 is subject to N5-methylglutamine.

Belongs to the prokaryotic/mitochondrial release factor family. In terms of processing, methylated by PrmC. Methylation increases the termination efficiency of RF2.

The protein resides in the cytoplasm. Its function is as follows. Peptide chain release factor 2 directs the termination of translation in response to the peptide chain termination codons UGA and UAA. The protein is Peptide chain release factor 2 (prfB) of Mycobacterium bovis (strain ATCC BAA-935 / AF2122/97).